Here is a 376-residue protein sequence, read N- to C-terminus: Anhydro-N-acetylmuramic acid kinase (376 aa).

Residue 11 to 18 (GTSMDGVD) participates in ATP binding.

The protein belongs to the anhydro-N-acetylmuramic acid kinase family.

It catalyses the reaction 1,6-anhydro-N-acetyl-beta-muramate + ATP + H2O = N-acetyl-D-muramate 6-phosphate + ADP + H(+). The protein operates within amino-sugar metabolism; 1,6-anhydro-N-acetylmuramate degradation. Its pathway is cell wall biogenesis; peptidoglycan recycling. Catalyzes the specific phosphorylation of 1,6-anhydro-N-acetylmuramic acid (anhMurNAc) with the simultaneous cleavage of the 1,6-anhydro ring, generating MurNAc-6-P. Is required for the utilization of anhMurNAc either imported from the medium or derived from its own cell wall murein, and thus plays a role in cell wall recycling. The protein is Anhydro-N-acetylmuramic acid kinase of Acinetobacter baylyi (strain ATCC 33305 / BD413 / ADP1).